A 184-amino-acid polypeptide reads, in one-letter code: Cell wall protein phiA (184 aa).

The N-terminal stretch at 1 to 21 (MQLKNLIFAAATAAALPATDA) is a signal peptide. N58 carries N-linked (GlcNAc...) asparagine glycosylation.

It belongs to the phiA family.

The protein resides in the secreted. It localises to the cell wall. Its function is as follows. Cell wall protein involved in development of asexual structures such as phialide and conidium development, and thus required for spore formation. Plays a role as a general stress protectant produced by the fungus in competition with antagonistic bacteria. In Aspergillus niger (strain ATCC MYA-4892 / CBS 513.88 / FGSC A1513), this protein is Cell wall protein phiA.